The chain runs to 296 residues: Light-independent protochlorophyllide reductase iron-sulfur ATP-binding protein (296 aa).

Residues 39–44 (GIGKST) and Lys-68 contribute to the ATP site. Residue Ser-43 participates in Mg(2+) binding. Residues Cys-124 and Cys-158 each contribute to the [4Fe-4S] cluster site. Residue 209-210 (NR) coordinates ATP.

Belongs to the NifH/BchL/ChlL family. In terms of assembly, homodimer. Protochlorophyllide reductase is composed of three subunits; ChlL, ChlN and ChlB. [4Fe-4S] cluster is required as a cofactor.

It carries out the reaction chlorophyllide a + oxidized 2[4Fe-4S]-[ferredoxin] + 2 ADP + 2 phosphate = protochlorophyllide a + reduced 2[4Fe-4S]-[ferredoxin] + 2 ATP + 2 H2O. It participates in porphyrin-containing compound metabolism; chlorophyll biosynthesis (light-independent). Functionally, component of the dark-operative protochlorophyllide reductase (DPOR) that uses Mg-ATP and reduced ferredoxin to reduce ring D of protochlorophyllide (Pchlide) to form chlorophyllide a (Chlide). This reaction is light-independent. The L component serves as a unique electron donor to the NB-component of the complex, and binds Mg-ATP. The sequence is that of Light-independent protochlorophyllide reductase iron-sulfur ATP-binding protein from Prochlorococcus marinus (strain MIT 9303).